The sequence spans 610 residues: UvrABC system protein C (610 aa).

Residues 16–94 form the GIY-YIG domain; the sequence is SQPGVYRMYD…IKLYQPRYNV (79 aa). One can recognise a UVR domain in the interval 204–239; that stretch reads QQVLTRLIERMEQASQQLKFEDAARYRDQIQAVRQV.

This sequence belongs to the UvrC family. In terms of assembly, interacts with UvrB in an incision complex.

The protein resides in the cytoplasm. The UvrABC repair system catalyzes the recognition and processing of DNA lesions. UvrC both incises the 5' and 3' sides of the lesion. The N-terminal half is responsible for the 3' incision and the C-terminal half is responsible for the 5' incision. This Photorhabdus laumondii subsp. laumondii (strain DSM 15139 / CIP 105565 / TT01) (Photorhabdus luminescens subsp. laumondii) protein is UvrABC system protein C.